We begin with the raw amino-acid sequence, 434 residues long: O-phosphoseryl-tRNA(Sec) selenium transferase (434 aa).

A tetramerization region spans residues 1 to 40 (MGLNITGLIPKHMENRGKLTLKENLKIIENILEQRKAPEN). Arg-71 provides a ligand contact to pyridoxal 5'-phosphate. The phosphate loop (P-loop) stretch occupies residues 92-102 (GRSGNLIDPQP). The substrate site is built by Arg-93, Ser-94, and Gln-101. The residue at position 277 (Lys-277) is an N6-(pyridoxal phosphate)lysine. Substrate is bound at residue Arg-306.

It belongs to the SepSecS family. As to quaternary structure, homotetramer. Pyridoxal 5'-phosphate serves as cofactor.

It catalyses the reaction O-phospho-L-seryl-tRNA(Sec) + selenophosphate + H2O = L-selenocysteinyl-tRNA(Sec) + 2 phosphate. The protein operates within aminoacyl-tRNA biosynthesis; selenocysteinyl-tRNA(Sec) biosynthesis; selenocysteinyl-tRNA(Sec) from L-seryl-tRNA(Sec) (archaeal/eukaryal route): step 2/2. Converts O-phosphoseryl-tRNA(Sec) to selenocysteinyl-tRNA(Sec) required for selenoprotein biosynthesis. The sequence is that of O-phosphoseryl-tRNA(Sec) selenium transferase (spcS) from Methanocaldococcus jannaschii (strain ATCC 43067 / DSM 2661 / JAL-1 / JCM 10045 / NBRC 100440) (Methanococcus jannaschii).